A 1191-amino-acid chain; its full sequence is Probable inositol polyphosphate 5-phosphatase C9G1.10c (1191 aa).

5 stretches are compositionally biased toward polar residues: residues Met-1–Val-10, Gln-72–Asn-101, Ser-114–Ser-135, Ser-151–Gly-161, and Asn-181–Ser-193. The interval Met-1–Ser-193 is disordered. The residue at position 195 (Ser-195) is a Phosphoserine. Disordered regions lie at residues Ser-205–Val-281, Ser-294–Leu-334, and Ile-355–Ser-425. Residues Thr-268 to Pro-280 show a composition bias toward pro residues. Residues Ser-302–Leu-311 are compositionally biased toward basic residues. 3 stretches are compositionally biased toward polar residues: residues Thr-316–Leu-334, His-367–Leu-382, and Leu-400–Glu-413. Over residues Gln-414–Ser-425 the composition is skewed to low complexity.

The protein belongs to the inositol 1,4,5-trisphosphate 5-phosphatase family.

The protein resides in the cytoplasm. This is Probable inositol polyphosphate 5-phosphatase C9G1.10c from Schizosaccharomyces pombe (strain 972 / ATCC 24843) (Fission yeast).